The following is a 256-amino-acid chain: 5'-nucleotidase SurE (256 aa).

Residues D8, D9, S40, and N94 each coordinate a divalent metal cation.

The protein belongs to the SurE nucleotidase family. A divalent metal cation serves as cofactor.

The protein localises to the cytoplasm. The catalysed reaction is a ribonucleoside 5'-phosphate + H2O = a ribonucleoside + phosphate. Functionally, nucleotidase that shows phosphatase activity on nucleoside 5'-monophosphates. This Wolbachia pipientis subsp. Culex pipiens (strain wPip) protein is 5'-nucleotidase SurE.